Here is a 276-residue protein sequence, read N- to C-terminus: Golgi apparatus membrane protein TVP23 homolog C (276 aa).

Met-1 carries the post-translational modification N-acetylmethionine. Residues 1-21 (MLQQDSNDDTEDVSLFDAEEE) are disordered. The next 2 membrane-spanning stretches (helical) occupy residues 52–72 (LLCELLSSSFITCMVTIILLL) and 126–146 (IFWLGLIACSVLWVIFAFSAL). Positions 254 to 276 (GESPNSRGTGEPGPKFHLASGMH) are disordered.

It belongs to the TVP23 family.

It is found in the membrane. This is Golgi apparatus membrane protein TVP23 homolog C (TVP23C) from Homo sapiens (Human).